The primary structure comprises 184 residues: Elongation factor P (184 aa).

This sequence belongs to the elongation factor P family.

Its subcellular location is the cytoplasm. The protein operates within protein biosynthesis; polypeptide chain elongation. In terms of biological role, involved in peptide bond synthesis. Stimulates efficient translation and peptide-bond synthesis on native or reconstituted 70S ribosomes in vitro. Probably functions indirectly by altering the affinity of the ribosome for aminoacyl-tRNA, thus increasing their reactivity as acceptors for peptidyl transferase. The protein is Elongation factor P of Thermus thermophilus (strain ATCC BAA-163 / DSM 7039 / HB27).